Consider the following 216-residue polypeptide: Maintenance of carboxysome distribution protein A (216 aa).

The ATP site is built by Gly-18, Gly-19, Gly-21, Lys-22, Thr-23, Thr-24, and Gln-47. Thr-23 serves as a coordination point for Mg(2+).

It belongs to the ParA family. McdA subfamily. As to quaternary structure, homodimerizes in the presence of ATP. Each subunit binds 1 ATP molecule; some residues cross the dimer interface to contact ATP in the other subunit. Forms a complex with McdB.

The protein localises to the cytoplasm. It is found in the nucleoid. It carries out the reaction ATP + H2O = ADP + phosphate + H(+). Functionally, mcdA and McdB together mediate carboxysome (Cb) spacing, size, ultrastructure and probably inheritance in the cell, together they prevent Cb aggregation. McdA is an ATPase that forms dynamic gradients on the nucleoid in response to adapter protein McdB, which associates with carboxysomes. The interplay between McdA gradients on the nucleoid and McdB-bound carboxysomes result in the equal spacing of Cbs along the cell length. Its function is as follows. Incorrect positioning (aggregation) of carboxysomes results in reduced CO(2) fixation by encapsulated ribulose-1,5-bisphosphate carboxylase (RuBisCO, cbbL/cbbS), which leads to slower growth. The sequence is that of Maintenance of carboxysome distribution protein A from Gloeobacter kilaueensis (strain ATCC BAA-2537 / CCAP 1431/1 / ULC 316 / JS1).